The primary structure comprises 878 residues: RNA-directed RNA polymerase (878 aa).

Residue 258-265 participates in GTP binding; sequence GLPYVGRT. The 201-residue stretch at 397–597 folds into the RdRp catalytic domain; it reads LVYADNIYIV…DKERLFCSAA (201 aa). Residues 845–878 are disordered; that stretch reads GAGTSRPMGMEAPTRSKNAVKMAKRAQRQKESRQ.

Interacts with VP3 in the cytoplasm. May exist in multiple phosphorylated forms.

The protein resides in the virion. The catalysed reaction is RNA(n) + a ribonucleoside 5'-triphosphate = RNA(n+1) + diphosphate. In terms of biological role, RNA-dependent RNA polymerase which is found both free and covalently attached to the genomic RNA. May also contain guanylyl and methyl transferase activities. This Gallus gallus (Chicken) protein is RNA-directed RNA polymerase (VP1).